The chain runs to 80 residues: MKNIEERIKKIIFEKLDIKQEKIFNDASFIDDLGADSLDTVELIMALEEEFDIEISDEEAEKINTVQKSIDFIQNKNLKK.

One can recognise a Carrier domain in the interval 2 to 77 (KNIEERIKKI…KSIDFIQNKN (76 aa)). O-(pantetheine 4'-phosphoryl)serine is present on S37.

Belongs to the acyl carrier protein (ACP) family. Post-translationally, 4'-phosphopantetheine is transferred from CoA to a specific serine of apo-ACP by AcpS. This modification is essential for activity because fatty acids are bound in thioester linkage to the sulfhydryl of the prosthetic group.

The protein localises to the cytoplasm. It participates in lipid metabolism; fatty acid biosynthesis. Its function is as follows. Carrier of the growing fatty acid chain in fatty acid biosynthesis. This is Acyl carrier protein from Buchnera aphidicola subsp. Acyrthosiphon pisum (strain 5A).